The sequence spans 171 residues: Peptide deformylase (171 aa).

Fe cation is bound by residues Cys-91 and His-133. Residue Glu-134 is part of the active site. His-137 is a Fe cation binding site.

This sequence belongs to the polypeptide deformylase family. Fe(2+) serves as cofactor.

It catalyses the reaction N-terminal N-formyl-L-methionyl-[peptide] + H2O = N-terminal L-methionyl-[peptide] + formate. Removes the formyl group from the N-terminal Met of newly synthesized proteins. Requires at least a dipeptide for an efficient rate of reaction. N-terminal L-methionine is a prerequisite for activity but the enzyme has broad specificity at other positions. In Haemophilus ducreyi (strain 35000HP / ATCC 700724), this protein is Peptide deformylase.